A 425-amino-acid chain; its full sequence is Enolase (425 aa).

Gln162 contributes to the (2R)-2-phosphoglycerate binding site. Glu204 serves as the catalytic Proton donor. Mg(2+) contacts are provided by Asp241, Glu288, and Asp315. (2R)-2-phosphoglycerate is bound by residues Lys340, Arg369, Ser370, and Lys391. The active-site Proton acceptor is the Lys340.

This sequence belongs to the enolase family. Mg(2+) is required as a cofactor.

The protein localises to the cytoplasm. Its subcellular location is the secreted. It localises to the cell surface. It carries out the reaction (2R)-2-phosphoglycerate = phosphoenolpyruvate + H2O. Its pathway is carbohydrate degradation; glycolysis; pyruvate from D-glyceraldehyde 3-phosphate: step 4/5. Its function is as follows. Catalyzes the reversible conversion of 2-phosphoglycerate (2-PG) into phosphoenolpyruvate (PEP). It is essential for the degradation of carbohydrates via glycolysis. The protein is Enolase of Porphyromonas gingivalis (strain ATCC 33277 / DSM 20709 / CIP 103683 / JCM 12257 / NCTC 11834 / 2561).